We begin with the raw amino-acid sequence, 59 residues long: Small ribosomal subunit protein eS17 (59 aa).

This sequence belongs to the eukaryotic ribosomal protein eS17 family.

The protein is Small ribosomal subunit protein eS17 of Halobacterium salinarum (strain ATCC 29341 / DSM 671 / R1).